Reading from the N-terminus, the 322-residue chain is UDP-N-acetylenolpyruvoylglucosamine reductase (322 aa).

Residues 36–202 enclose the FAD-binding PCMH-type domain; it reads RAGGPAQVLF…TSVLFEGVPG (167 aa). R182 is an active-site residue. Catalysis depends on S231, which acts as the Proton donor. Residue E301 is part of the active site.

It belongs to the MurB family. It depends on FAD as a cofactor.

The protein resides in the cytoplasm. It carries out the reaction UDP-N-acetyl-alpha-D-muramate + NADP(+) = UDP-N-acetyl-3-O-(1-carboxyvinyl)-alpha-D-glucosamine + NADPH + H(+). It participates in cell wall biogenesis; peptidoglycan biosynthesis. Functionally, cell wall formation. The sequence is that of UDP-N-acetylenolpyruvoylglucosamine reductase from Brucella suis (strain ATCC 23445 / NCTC 10510).